Reading from the N-terminus, the 209-residue chain is Superoxide dismutase [Mn/Fe] (209 aa).

Fe(3+)-binding residues include His38, His90, Asp172, and His176. Mn(2+)-binding residues include His38, His90, Asp172, and His176.

Belongs to the iron/manganese superoxide dismutase family. Mn(2+) serves as cofactor. Requires Fe(3+) as cofactor.

The enzyme catalyses 2 superoxide + 2 H(+) = H2O2 + O2. In terms of biological role, destroys superoxide anion radicals which are normally produced within the cells and which are toxic to biological systems. Catalyzes the dismutation of superoxide anion radicals into O2 and H2O2 by successive reduction and oxidation of the transition metal ion at the active site. The sequence is that of Superoxide dismutase [Mn/Fe] (sodB) from Rickettsia bellii (strain RML369-C).